Here is a 141-residue protein sequence, read N- to C-terminus: ATP synthase epsilon chain (141 aa).

Belongs to the ATPase epsilon chain family. As to quaternary structure, F-type ATPases have 2 components, CF(1) - the catalytic core - and CF(0) - the membrane proton channel. CF(1) has five subunits: alpha(3), beta(3), gamma(1), delta(1), epsilon(1). CF(0) has three main subunits: a, b and c.

Its subcellular location is the cell membrane. Its function is as follows. Produces ATP from ADP in the presence of a proton gradient across the membrane. The chain is ATP synthase epsilon chain from Natranaerobius thermophilus (strain ATCC BAA-1301 / DSM 18059 / JW/NM-WN-LF).